The sequence spans 350 residues: Holliday junction branch migration complex subunit RuvB (350 aa).

Positions 1 to 20 are disordered; that stretch reads MIEADRLITASPREREEQQD. Positions 4–184 are large ATPase domain (RuvB-L); that stretch reads ADRLITASPR…FGIVQRLEFY (181 aa). ATP contacts are provided by residues Ile23, Arg24, Gly65, Lys68, Thr69, Thr70, 131–133, Arg174, Tyr184, and Arg221; that span reads EDF. Residue Thr69 participates in Mg(2+) binding. A small ATPAse domain (RuvB-S) region spans residues 185–255; that stretch reads GIDDLATIVT…IADQALNLLD (71 aa). The segment at 258 to 350 is head domain (RuvB-H); that stretch reads ERGFDHSDRR…SGDLFAVSDE (93 aa). DNA contacts are provided by Arg294, Arg313, and Arg318.

Belongs to the RuvB family. As to quaternary structure, homohexamer. Forms an RuvA(8)-RuvB(12)-Holliday junction (HJ) complex. HJ DNA is sandwiched between 2 RuvA tetramers; dsDNA enters through RuvA and exits via RuvB. An RuvB hexamer assembles on each DNA strand where it exits the tetramer. Each RuvB hexamer is contacted by two RuvA subunits (via domain III) on 2 adjacent RuvB subunits; this complex drives branch migration. In the full resolvosome a probable DNA-RuvA(4)-RuvB(12)-RuvC(2) complex forms which resolves the HJ.

Its subcellular location is the cytoplasm. It carries out the reaction ATP + H2O = ADP + phosphate + H(+). The RuvA-RuvB-RuvC complex processes Holliday junction (HJ) DNA during genetic recombination and DNA repair, while the RuvA-RuvB complex plays an important role in the rescue of blocked DNA replication forks via replication fork reversal (RFR). RuvA specifically binds to HJ cruciform DNA, conferring on it an open structure. The RuvB hexamer acts as an ATP-dependent pump, pulling dsDNA into and through the RuvAB complex. RuvB forms 2 homohexamers on either side of HJ DNA bound by 1 or 2 RuvA tetramers; 4 subunits per hexamer contact DNA at a time. Coordinated motions by a converter formed by DNA-disengaged RuvB subunits stimulates ATP hydrolysis and nucleotide exchange. Immobilization of the converter enables RuvB to convert the ATP-contained energy into a lever motion, pulling 2 nucleotides of DNA out of the RuvA tetramer per ATP hydrolyzed, thus driving DNA branch migration. The RuvB motors rotate together with the DNA substrate, which together with the progressing nucleotide cycle form the mechanistic basis for DNA recombination by continuous HJ branch migration. Branch migration allows RuvC to scan DNA until it finds its consensus sequence, where it cleaves and resolves cruciform DNA. The polypeptide is Holliday junction branch migration complex subunit RuvB (Ectopseudomonas mendocina (strain ymp) (Pseudomonas mendocina)).